A 572-amino-acid polypeptide reads, in one-letter code: MPGETEEPRSPEQQDQEGGPAAAADAASEELRPGAAAAPAAPAETASSRVLRGGRDRGRTAAAAAAAAAAVSRRRKAEYPRRRRSSPSNRPPDGPGHQPAAAKPPSPAQGKKSPRLQCIEKLTTDKDPKEEKEDDSVLPQEVSITTTRASRSWRSSSRTSISRLRDSENTRSSRSKTGSLQLVCKTEPITDQLDYDVPEEHQSPGGISSDEEEEEEEEMLISEEEIPFKDDPRDETYKPHLERETPKPRRKSGKVKEEKEKKEIKVEVEVEVKEEENEIREDEEPPRKRGRRRKDDKSPRLPKRRKKPPIQYVRCEMEGCGTVLAHPRYLQHHIKYQHLLKKKYVCPHPSCGRLFRLQKQLLRHAKHHTDQRDYICEYCARAFKSSHNLAVHRMIHTGEKPLQCEICGFTCRQKASLNWHMKKHDADSFYQFSCNICGKKFEKKDSVVAHKAKSHPEVLIAEALAANAGALITSTDILGTNPEPLTQPADGQGLPLLPEPLGNSTAGECLLLEAEGMSKSYCSGTERVSLMADGKIFVGSGSSGGTEGLVMNSDILGATTEVLIEDTDSTGP.

The span at 1-12 (MPGETEEPRSPE) shows a compositional bias: basic and acidic residues. The disordered stretch occupies residues 1–308 (MPGETEEPRS…PRLPKRRKKP (308 aa)). Low complexity predominate over residues 61–70 (AAAAAAAAAA). A compositionally biased stretch (basic residues) spans 72-85 (SRRRKAEYPRRRRS). Residues serine 86 and serine 106 each carry the phosphoserine modification. The segment covering 122 to 131 (LTTDKDPKEE) has biased composition (basic and acidic residues). Residues 143–162 (SITTTRASRSWRSSSRTSIS) show a composition bias toward low complexity. Positions 209-225 (SDEEEEEEEEMLISEEE) are enriched in acidic residues. Composition is skewed to basic and acidic residues over residues 226–247 (IPFK…ETPK) and 254–271 (KVKE…VEVE). The segment covering 272-284 (VKEEENEIREDEE) has biased composition (acidic residues). C2H2-type zinc fingers lie at residues 313-338 (VRCE…KYQH), 344-368 (YVCP…AKHH), 374-396 (YICE…RMIH), 402-424 (LQCE…MKKH), and 432-455 (FSCN…AKSH). The tract at residues 340–370 (LKKKYVCPHPSCGRLFRLQKQLLRHAKHHTD) is interaction with MAP3K14/NIK.

The protein belongs to the krueppel C2H2-type zinc-finger protein family. As to quaternary structure, interacts with MAP3K14/NIK. Found in all the examined tissues including brain, heart, kidney, lung, liver, spleen, thymus, skeletal muscle, ovary and testis.

It is found in the nucleus. It catalyses the reaction S-ubiquitinyl-[E2 ubiquitin-conjugating enzyme]-L-cysteine + [acceptor protein]-L-lysine = [E2 ubiquitin-conjugating enzyme]-L-cysteine + N(6)-ubiquitinyl-[acceptor protein]-L-lysine.. The protein operates within protein modification; protein ubiquitination. In terms of biological role, atypical E3 ubiquitin-protein ligase that mediates 'Lys-63'-linked ubiquitination of MAP3K14/NIK, leading to stabilize and activate MAP3K14/NIK. It thereby acts as an activator of the non-canonical NF-kappa-B2/NFKB2 pathway. May also play an important role in cell proliferation and/or anti-apoptosis. The chain is E3 ubiquitin-protein ligase ZFP91 (Zfp91) from Mus musculus (Mouse).